Reading from the N-terminus, the 193-residue chain is Ion-translocating oxidoreductase complex subunit A (193 aa).

6 helical membrane passes run 4-24 (FFFI…KFLG), 39-59 (IGMG…SWMV), 71-91 (FLRI…IEVV), 102-122 (ALGI…VALL), 134-154 (LLYG…FAGM), and 167-187 (FAGA…FMGF).

Belongs to the NqrDE/RnfAE family. The complex is composed of six subunits: RnfA, RnfB, RnfC, RnfD, RnfE and RnfG.

Its subcellular location is the cellular chromatophore membrane. Its function is as follows. Part of a membrane-bound complex that couples electron transfer with translocation of ions across the membrane. The polypeptide is Ion-translocating oxidoreductase complex subunit A (Cereibacter sphaeroides (strain ATCC 17029 / ATH 2.4.9) (Rhodobacter sphaeroides)).